Consider the following 797-residue polypeptide: Striatin-3 (797 aa).

Met1 carries the N-acetylmethionine modification. Gly residues-rich tracts occupy residues 1-13 (MDEL…GGPG) and 23-43 (GPGG…GGGP). The disordered stretch occupies residues 1–60 (MDELAGGGGGGPGMAAPPRQQQGPGGNLGLSPGGNGAAGGGGPPASEGAGPAAGPELSRP). The segment covering 44–56 (PASEGAGPAAGPE) has biased composition (low complexity). The interval 71 to 79 (YIQHEWARF) is caveolin-binding. A coiled-coil region spans residues 77 to 136 (ARFEMERAHWEVERAELQARIAFLQGERKGQENLKKDLVRRIKMLEYALKQERAKYHKLK). Thr150 is subject to Phosphothreonine. The calmodulin-binding stretch occupies residues 166 to 183 (QNSQLTWKQGRQLLRQYL). A phosphoserine mark is found at Ser202, Ser214, and Ser229. Disordered stretches follow at residues 224–278 (LNGG…KHRM) and 313–338 (DGEG…SPTA). The span at 230–241 (PKQKGQEIKRSS) shows a compositional bias: basic and acidic residues. Residues 253-265 (NADDSDEDEENDM) are compositionally biased toward acidic residues. A phosphoserine mark is found at Ser257 and Ser335. WD repeat units lie at residues 478–517 (SHFD…PAKK), 531–570 (AHIG…VDPY), 584–623 (GHTD…PCIC), 679–718 (QSNN…MIHS), 721–760 (AHLD…CVQE), and 767–797 (KLDE…KVFV).

It belongs to the WD repeat striatin family. As to quaternary structure, tetramerizes. Part of the core of STRIPAK complexes composed of PP2A catalytic and scaffolding subunits, the striatins (PP2A regulatory subunits), the striatin-associated proteins MOB4, STRIP1 and STRIP2, PDCD10 and members of the STE20 kinases, such as STK24 and STK26. The STRIPAK complex can be extended by adapter proteins such as SLMAP:SIKE1 or CTTNBP2NL. Interacts with CDC42BPB.

Its subcellular location is the cytoplasm. The protein localises to the membrane. Calmodulin-binding scaffolding protein which is the center of the striatin-interacting phosphatase and kinase (STRIPAK) complexes. STRIPAK complexes have critical roles in protein (de)phosphorylation and are regulators of multiple signaling pathways including Hippo, MAPK, nuclear receptor and cytoskeleton remodeling. Different types of STRIPAK complexes are involved in a variety of biological processes such as cell growth, differentiation, apoptosis, metabolism and immune regulation. The chain is Striatin-3 from Homo sapiens (Human).